A 106-amino-acid chain; its full sequence is ATP-dependent Clp protease adapter protein ClpS (106 aa).

It belongs to the ClpS family. In terms of assembly, binds to the N-terminal domain of the chaperone ClpA.

Involved in the modulation of the specificity of the ClpAP-mediated ATP-dependent protein degradation. The polypeptide is ATP-dependent Clp protease adapter protein ClpS (Aliivibrio salmonicida (strain LFI1238) (Vibrio salmonicida (strain LFI1238))).